A 242-amino-acid chain; its full sequence is Ubiquinone biosynthesis O-methyltransferase (242 aa).

Arg-44, Gly-64, Asp-85, and Met-129 together coordinate S-adenosyl-L-methionine.

This sequence belongs to the methyltransferase superfamily. UbiG/COQ3 family.

The catalysed reaction is a 3-demethylubiquinol + S-adenosyl-L-methionine = a ubiquinol + S-adenosyl-L-homocysteine + H(+). It carries out the reaction a 3-(all-trans-polyprenyl)benzene-1,2-diol + S-adenosyl-L-methionine = a 2-methoxy-6-(all-trans-polyprenyl)phenol + S-adenosyl-L-homocysteine + H(+). Its pathway is cofactor biosynthesis; ubiquinone biosynthesis. Functionally, O-methyltransferase that catalyzes the 2 O-methylation steps in the ubiquinone biosynthetic pathway. This chain is Ubiquinone biosynthesis O-methyltransferase, found in Klebsiella pneumoniae (strain 342).